The chain runs to 993 residues: General transcription factor II-I repeat domain-containing protein 1 (993 aa).

2 GTF2I-like repeats span residues 117–211 (LGPT…EPKS) and 332–426 (LRET…DGTT). The disordered stretch occupies residues 461–480 (GSRSEKSSISDECEPGTSSE). 3 GTF2I-like repeats span residues 597 to 691 (DGIG…LEDC), 727 to 821 (LSRI…RPDD), and 824 to 918 (ANRL…ICSE). A disordered region spans residues 916 to 961 (CSEPPKIKNGNTGPKRKRKRVSEGNSISSASSNCSSSSSSSSNMDP). Residues 929 to 936 (PKRKRKRV) carry the Nuclear localization signal motif. Positions 938–961 (EGNSISSASSNCSSSSSSSSNMDP) are enriched in low complexity.

It belongs to the TFII-I family. Interacts (via repeats 4-5) with foxh1/fast1 (via Fork-head domain). Interacts with smad2 and smad3 (via MH1 domain) in a ligand (activin)-dependent manner. Interacts with pou5f1.1/oct-25 to form a repression complex on the promoters of the gsc and mix2 genes. Uniformly expressed in the embryo in pre- and early gastrula stages. Enriched in the head region of early neurula through tailbud stages.

It is found in the nucleus. Transcription factor that activates a subset of organizer-specific genes. Binds to the distal element (DE) of the gsc promoter to regulate its expression. In the presence of pou5f1.1/oct-25, forms a repression complex on the promoter of the gsc and mix2 genes to inhibit their transcription. The sequence is that of General transcription factor II-I repeat domain-containing protein 1 (gtf2ird1) from Xenopus laevis (African clawed frog).